The primary structure comprises 272 residues: Putative phosphoenolpyruvate synthase regulatory protein (272 aa).

Residue 152-159 coordinates ADP; sequence GVSRCGKT.

Belongs to the pyruvate, phosphate/water dikinase regulatory protein family. PSRP subfamily.

The enzyme catalyses [pyruvate, water dikinase] + ADP = [pyruvate, water dikinase]-phosphate + AMP + H(+). It carries out the reaction [pyruvate, water dikinase]-phosphate + phosphate + H(+) = [pyruvate, water dikinase] + diphosphate. Functionally, bifunctional serine/threonine kinase and phosphorylase involved in the regulation of the phosphoenolpyruvate synthase (PEPS) by catalyzing its phosphorylation/dephosphorylation. In Pseudomonas fluorescens (strain SBW25), this protein is Putative phosphoenolpyruvate synthase regulatory protein.